The sequence spans 269 residues: Zinc transporter ZupT (269 aa).

The next 8 helical transmembrane spans lie at 11–31, 40–60, 80–100, 125–145, 158–178, 187–207, 217–237, and 249–269; these read IALA…LLVL, LLAF…LSEI, YGTL…HFIP, ALLT…ATFF, AFAI…PVYF, FSAS…GYWL, FGWV…DELL, and TVYG…LFKW. Residues Asn136 and Glu139 each contribute to the Fe(2+) site. Zn(2+)-binding residues include Glu139 and His164. Positions 165, 168, and 197 each coordinate Fe(2+). Residue Glu168 participates in Zn(2+) binding.

It belongs to the ZIP transporter (TC 2.A.5) family. ZupT subfamily.

It localises to the cell inner membrane. The catalysed reaction is Zn(2+)(in) = Zn(2+)(out). Mediates zinc uptake. May also transport other divalent cations. This Stenotrophomonas maltophilia (strain R551-3) protein is Zinc transporter ZupT.